The chain runs to 90 residues: Small ribosomal subunit protein bS16 (90 aa).

Belongs to the bacterial ribosomal protein bS16 family. As to quaternary structure, part of the 30S ribosomal subunit.

The polypeptide is Small ribosomal subunit protein bS16 (Bacillus subtilis (strain 168)).